A 162-amino-acid chain; its full sequence is 6,7-dimethyl-8-ribityllumazine synthase (162 aa).

5-amino-6-(D-ribitylamino)uracil is bound by residues Phe22, Thr56–Glu58, and Ala80–Ile82. (2S)-2-hydroxy-3-oxobutyl phosphate is bound at residue Gly85–Thr86. The Proton donor role is filled by His88. A 5-amino-6-(D-ribitylamino)uracil-binding site is contributed by Met113. Arg127 is a binding site for (2S)-2-hydroxy-3-oxobutyl phosphate.

This sequence belongs to the DMRL synthase family.

It catalyses the reaction (2S)-2-hydroxy-3-oxobutyl phosphate + 5-amino-6-(D-ribitylamino)uracil = 6,7-dimethyl-8-(1-D-ribityl)lumazine + phosphate + 2 H2O + H(+). It participates in cofactor biosynthesis; riboflavin biosynthesis; riboflavin from 2-hydroxy-3-oxobutyl phosphate and 5-amino-6-(D-ribitylamino)uracil: step 1/2. In terms of biological role, catalyzes the formation of 6,7-dimethyl-8-ribityllumazine by condensation of 5-amino-6-(D-ribitylamino)uracil with 3,4-dihydroxy-2-butanone 4-phosphate. This is the penultimate step in the biosynthesis of riboflavin. The polypeptide is 6,7-dimethyl-8-ribityllumazine synthase (Anaeromyxobacter dehalogenans (strain 2CP-1 / ATCC BAA-258)).